The chain runs to 213 residues: Nicolin-1 (213 aa).

In terms of assembly, part of the neuronal tubulin polyglutamylase complex which contains TPGS1, TPGS2, TTLL1, LRRC49 and NICN1.

Its subcellular location is the nucleus. The chain is Nicolin-1 (NICN1) from Canis lupus familiaris (Dog).